Reading from the N-terminus, the 107-residue chain is UPF0060 membrane protein mll7841 (107 aa).

4 helical membrane-spanning segments follow: residues 4–24 (LFYTAAALAEIAGCFSVWAWW), 30–50 (PLWLAPGFVSLLLFAWLLALV), 60–80 (AAYGGIYIAASLAWLWLVEGV), and 87–107 (LAGAALCIAGASLILLAPRGA).

The protein belongs to the UPF0060 family.

The protein localises to the cell inner membrane. This Mesorhizobium japonicum (strain LMG 29417 / CECT 9101 / MAFF 303099) (Mesorhizobium loti (strain MAFF 303099)) protein is UPF0060 membrane protein mll7841.